Reading from the N-terminus, the 749-residue chain is MGDVLSTHLDDARRQHIAEKTEKILTEFLRFYEDQYGVSLFNSMRHEIEGTGPPQAQLLWRKVPLDERIIFSGNLFQYQEDNKKWRNRFSLVPHNYGLVLYENKVAYERQIPPRAVINSAGYKVLTSVDQYLELVGNSLPGTTSKSGSTPILKCPTQFPLILWHPYARHYYFCMMTEAEQDKWQAVLQDCVRHCNNGIPENSKVEGPAFTDAIRMYRQSKEQYGTWEMLCGNEVQILSNLVMEELGPALKAELGPRLKGKPQERQRQWIQISDAVYRLVFEQAKVHFEDVLCKLQRARPAMEAVIRTDMDQIITSKEHLASKIRAFILPKAEVCVRNHVQPYIPSILEALMVPTSQGFTEVRDVFFKEVTDMNLNVINEGGIDKLGEYMEKLSQLAYHPLKMQSCYEKMEPLRLDGLQQRFDVSSTSVFKQRAQIHMREQMDNAVYTFETLLHQELGKGPTKEELCKSIQRILERVLKKYDYDSSSVRKRFFREALLQITIPFLLKKLAPTCKSELPRFQELIFEDFARFILVENTYEEVVLQTVMKDILQAVKEAAVQRKHNLYRDSMVLHNSDPNLHLLAEGTPIDWGEQYGDSGDSGGGDSGGSPCPSEAATLTEKRRRAKQVMSVVQDEESGLPFEAGVEPPSPASPDSVTELRGLLAQDLQAESSPPASPLLNGAPVQESSQPVAVPEASPPASPLRHLPPGKAVDLEPPKPSDQETGEQVSSPGSRPPIHTTTEDSAGVQTEF.

Gly2 is lipidated: N-myristoyl glycine. Positions 68–192 (RIIFSGNLFQ…WQAVLQDCVR (125 aa)) constitute a PH domain. Phosphoserine occurs at positions 568, 574, 607, 628, 647, 650, 669, 674, 685, 695, and 699. The disordered stretch occupies residues 589 to 749 (WGEQYGDSGD…EDSAGVQTEF (161 aa)). Residues 710-719 (VDLEPPKPSD) show a composition bias toward basic and acidic residues. Over residues 723–749 (GEQVSSPGSRPPIHTTTEDSAGVQTEF) the composition is skewed to polar residues.

Belongs to the Niban family. Post-translationally, as apoptosis proceeds, degraded via an proteasome-independent pathway, probably by caspases.

It localises to the cytoplasm. The protein resides in the cytosol. It is found in the cell junction. The protein localises to the adherens junction. Its subcellular location is the membrane. Its function is as follows. May play a role in apoptosis suppression. This chain is Protein Niban 2, found in Mus musculus (Mouse).